A 513-amino-acid polypeptide reads, in one-letter code: NAD(P)H-quinone oxidoreductase subunit 2 (513 aa).

14 helical membrane passes run 15–35 (VIWPEGILIITLMVILIGDLI), 43–63 (WLPYVAIAGLLAAVVALYFTW), 80–100 (LSIVFRAIIALSTASTVLMSI), 110–130 (LAEFLAIMLTATLGGMFLSGA), 133–153 (LVMIFISLEMLSISSYLMTGY), 168–188 (LLIGASSSAIFLYGVSLLYGL), 211–231 (LALAIALVFVIAGIAFKISAV), 245–265 (PTPVVAFLSVGSKAAGFALAI), 281–301 (FIFIALAILSMILGNVVALAQ), 307–327 (MLAYSSIGQAGFVMIGLTAGT), 335–355 (IFYLLIYLFMNLGAFACVILF), 379–399 (LCLSICLLSLGGIPPLAGFFG), 401–421 (IYLFWAGWQAGLYALVLVGLV), and 467–487 (VGIVLSLVATSLAGILSNPLF).

This sequence belongs to the complex I subunit 2 family. In terms of assembly, NDH-1 can be composed of about 15 different subunits; different subcomplexes with different compositions have been identified which probably have different functions.

Its subcellular location is the cellular thylakoid membrane. The enzyme catalyses a plastoquinone + NADH + (n+1) H(+)(in) = a plastoquinol + NAD(+) + n H(+)(out). It catalyses the reaction a plastoquinone + NADPH + (n+1) H(+)(in) = a plastoquinol + NADP(+) + n H(+)(out). In terms of biological role, NDH-1 shuttles electrons from an unknown electron donor, via FMN and iron-sulfur (Fe-S) centers, to quinones in the respiratory and/or the photosynthetic chain. The immediate electron acceptor for the enzyme in this species is believed to be plastoquinone. Couples the redox reaction to proton translocation, and thus conserves the redox energy in a proton gradient. Cyanobacterial NDH-1 also plays a role in inorganic carbon-concentration. The sequence is that of NAD(P)H-quinone oxidoreductase subunit 2 from Microcystis aeruginosa (strain NIES-843 / IAM M-2473).